A 504-amino-acid polypeptide reads, in one-letter code: ATP synthase subunit alpha (504 aa).

Position 169–176 (169–176 (GDRGTGKT)) interacts with ATP.

Belongs to the ATPase alpha/beta chains family. F-type ATPases have 2 components, CF(1) - the catalytic core - and CF(0) - the membrane proton channel. CF(1) has five subunits: alpha(3), beta(3), gamma(1), delta(1), epsilon(1). CF(0) has three main subunits: a(1), b(2) and c(9-12). The alpha and beta chains form an alternating ring which encloses part of the gamma chain. CF(1) is attached to CF(0) by a central stalk formed by the gamma and epsilon chains, while a peripheral stalk is formed by the delta and b chains.

The protein localises to the cell inner membrane. It carries out the reaction ATP + H2O + 4 H(+)(in) = ADP + phosphate + 5 H(+)(out). Its function is as follows. Produces ATP from ADP in the presence of a proton gradient across the membrane. The alpha chain is a regulatory subunit. This Leptospira biflexa serovar Patoc (strain Patoc 1 / Ames) protein is ATP synthase subunit alpha.